Consider the following 312-residue polypeptide: Malate dehydrogenase (312 aa).

NAD(+) is bound by residues 12–17 (GAGFTG) and Asp-36. Substrate is bound by residues Arg-87 and Arg-93. NAD(+) contacts are provided by residues Asn-100 and 123–125 (LTN). Asn-125 is a substrate binding site. Ser-149 carries the post-translational modification Phosphoserine. Substrate is bound at residue Arg-156. The Proton acceptor role is filled by His-180.

It belongs to the LDH/MDH superfamily. MDH type 3 family.

The enzyme catalyses (S)-malate + NAD(+) = oxaloacetate + NADH + H(+). Functionally, catalyzes the reversible oxidation of malate to oxaloacetate. This is Malate dehydrogenase from Bacillus cereus (strain ZK / E33L).